A 213-amino-acid chain; its full sequence is Cytidylate kinase (213 aa).

9 to 17 (GPAASGKGT) is a binding site for ATP.

Belongs to the cytidylate kinase family. Type 1 subfamily.

It localises to the cytoplasm. The catalysed reaction is CMP + ATP = CDP + ADP. It catalyses the reaction dCMP + ATP = dCDP + ADP. In Caulobacter vibrioides (strain ATCC 19089 / CIP 103742 / CB 15) (Caulobacter crescentus), this protein is Cytidylate kinase.